The primary structure comprises 389 residues: Phospho-N-acetylmuramoyl-pentapeptide-transferase (389 aa).

The next 10 helical transmembrane spans lie at 25-45 (RAVM…PWVI), 73-93 (TMGG…WGDL), 97-117 (FIWI…VDDY), 135-155 (FWQS…VSEA), 190-210 (ISYP…IVGA), 222-242 (GLVI…AYVM), 258-278 (GAGE…AFLW), 286-306 (VFMG…VAVI), 311-331 (IVLF…MLQV), and 366-386 (QVVV…LSTL).

This sequence belongs to the glycosyltransferase 4 family. MraY subfamily. The cofactor is Mg(2+).

The protein resides in the cell inner membrane. The catalysed reaction is UDP-N-acetyl-alpha-D-muramoyl-L-alanyl-gamma-D-glutamyl-meso-2,6-diaminopimeloyl-D-alanyl-D-alanine + di-trans,octa-cis-undecaprenyl phosphate = di-trans,octa-cis-undecaprenyl diphospho-N-acetyl-alpha-D-muramoyl-L-alanyl-D-glutamyl-meso-2,6-diaminopimeloyl-D-alanyl-D-alanine + UMP. It participates in cell wall biogenesis; peptidoglycan biosynthesis. Its function is as follows. Catalyzes the initial step of the lipid cycle reactions in the biosynthesis of the cell wall peptidoglycan: transfers peptidoglycan precursor phospho-MurNAc-pentapeptide from UDP-MurNAc-pentapeptide onto the lipid carrier undecaprenyl phosphate, yielding undecaprenyl-pyrophosphoryl-MurNAc-pentapeptide, known as lipid I. This is Phospho-N-acetylmuramoyl-pentapeptide-transferase from Burkholderia mallei (strain NCTC 10247).